The chain runs to 61 residues: Protein translocase subunit SecE (61 aa).

Residues 38-58 (GIGMILIGLIGLVIRMIGYLI) form a helical membrane-spanning segment.

Belongs to the SecE/SEC61-gamma family. Component of the Sec protein translocase complex. Heterotrimer consisting of SecY (alpha), SecG (beta) and SecE (gamma) subunits. The heterotrimers can form oligomers, although 1 heterotrimer is thought to be able to translocate proteins. Interacts with the ribosome. May interact with SecDF, and other proteins may be involved.

Its subcellular location is the cell membrane. In terms of biological role, essential subunit of the Sec protein translocation channel SecYEG. Clamps together the 2 halves of SecY. May contact the channel plug during translocation. This is Protein translocase subunit SecE from Thermococcus onnurineus (strain NA1).